The sequence spans 509 residues: Maturase K (509 aa).

This sequence belongs to the intron maturase 2 family. MatK subfamily.

It localises to the plastid. Functionally, usually encoded in the trnK tRNA gene intron. Probably assists in splicing its own and other chloroplast group II introns. The sequence is that of Maturase K from Castilleja linariifolia (Wyoming Indian paintbrush).